We begin with the raw amino-acid sequence, 833 residues long: Serine/threonine-protein phosphatase 4 regulatory subunit 3A (833 aa).

Residues 1-100 (MTDTRRRVKV…DEIWEKICQV (100 aa)) enclose the WH1 domain. Ser-117 and Ser-127 each carry phosphoserine. Lys-655 is subject to N6-acetyllysine. Over residues 683–694 (FNTDEDDMEDGE) the composition is skewed to acidic residues. 2 disordered regions span residues 683–712 (FNTD…IMDP) and 733–833 (KTNL…KFDS). Residues Ser-698, Ser-741, Ser-768, Ser-771, Ser-774, Ser-777, and Ser-780 each carry the phosphoserine modification. Residues 734-751 (TNLSGRQSPSFKLSLSSG) are compositionally biased toward polar residues. The span at 752-768 (TKTNLTSQSSTTNLPGS) shows a compositional bias: low complexity. Positions 785-794 (PKNTSQTAAI) are enriched in polar residues. The span at 806–820 (YPDDDEDDDEDEDKE) shows a compositional bias: acidic residues.

The protein belongs to the SMEK family. As to quaternary structure, serine/threonine-protein phosphatase 4 (PP4) occurs in different assemblies of the catalytic and one or more regulatory subunits. Component of the PP4 complex PPP4C-PPP4R2-PPP4R3A. Interacts with PPP4C; the interaction requires PPP4R2.

It localises to the cytoplasm. The protein resides in the cytoskeleton. It is found in the microtubule organizing center. Its subcellular location is the centrosome. The protein localises to the nucleus. In terms of biological role, regulatory subunit of serine/threonine-protein phosphatase 4. May regulate the activity of PPP4C at centrosomal microtubule organizing centers. The PPP4C-PPP4R2-PPP4R3A PP4 complex specifically dephosphorylates H2AX phosphorylated on 'Ser-140' (gamma-H2AX) generated during DNA replication and required for DNA DSB repair. This is Serine/threonine-protein phosphatase 4 regulatory subunit 3A from Homo sapiens (Human).